Here is a 620-residue protein sequence, read N- to C-terminus: Glutathione-regulated potassium-efflux system protein KefC (620 aa).

Residues 1–3 are Periplasmic-facing; the sequence is MDS. A helical membrane pass occupies residues 4–24; it reads HTLLQALIYLGSAALIVPIAV. Residue arginine 25 is a topological domain, cytoplasmic. The chain crosses the membrane as a helical span at residues 26–46; it reads LGLGSVLGYLIAGCIIGPWGL. Topologically, residues 47-53 are periplasmic; that stretch reads RLVTDAE. The helical transmembrane segment at 54-74 threads the bilayer; the sequence is SILHFAEIGVVLMLFVIGLEL. The Cytoplasmic segment spans residues 75–89; that stretch reads DPQRLWKLRASVFGG. The chain crosses the membrane as a helical span at residues 90-110; that stretch reads GALQMGVCGGLIGLFCMFLGL. Residues 111-113 lie on the Periplasmic side of the membrane; sequence RWQ. A helical membrane pass occupies residues 114-134; that stretch reads VAELIGMTLALSSTAIAMQAM. At 135–148 the chain is on the cytoplasmic side; the sequence is NERNLTVSQVGRSA. The chain crosses the membrane as a helical span at residues 149 to 169; it reads FAVLLFQDIAAIPLVAMIPLL. The Periplasmic segment spans residues 170 to 177; that stretch reads AASGASTT. The chain crosses the membrane as a helical span at residues 178-198; sequence LGAFALSALKVAGALALVVLL. Over 199-213 the chain is Cytoplasmic; the sequence is GRYVTRPALRFVARS. A helical membrane pass occupies residues 214 to 233; sequence GLREVFSAVALFLVFGFGLL. Over 234–236 the chain is Periplasmic; the sequence is LEE. The chain crosses the membrane as a helical span at residues 237–254; it reads VGLSMAMGAFLAGVLLAS. Residues 255–269 are Cytoplasmic-facing; it reads SEYRHALESDIEPFK. A helical membrane pass occupies residues 270-290; that stretch reads GLLLGLFFIGVGMSIDFGTLV. At 291 to 293 the chain is on the periplasmic side; it reads ENP. The chain crosses the membrane as a helical span at residues 294 to 314; it reads LRILLLLAGFLAIKIVMLWLV. The Cytoplasmic portion of the chain corresponds to 315-326; the sequence is ARPLGVPAKQRR. Residues 327–347 form a helical membrane-spanning segment; it reads WFAVLLGQGSEFAFVVFGAAQ. Over 348-358 the chain is Periplasmic; sequence MADVLEPEWAK. The helical transmembrane segment at 359–379 threads the bilayer; sequence ALTLAVALSMAATPIFLVLLT. The Cytoplasmic portion of the chain corresponds to 380–620; sequence RMEKTATGEA…ADEPEVKPSI (241 aa). The RCK N-terminal domain occupies 399–518; the sequence is QPRVIVAGFG…AGVAMPERET (120 aa). Positions 599–620 are disordered; sequence QGTAEGKHSGEVADEPEVKPSI.

This sequence belongs to the monovalent cation:proton antiporter 2 (CPA2) transporter (TC 2.A.37) family. KefC subfamily. In terms of assembly, homodimer. Interacts with the regulatory subunit KefF.

The protein localises to the cell inner membrane. In terms of biological role, pore-forming subunit of a potassium efflux system that confers protection against electrophiles. Catalyzes K(+)/H(+) antiport. This Salmonella typhimurium (strain LT2 / SGSC1412 / ATCC 700720) protein is Glutathione-regulated potassium-efflux system protein KefC.